Reading from the N-terminus, the 119-residue chain is Small ribosomal subunit protein uS17 (119 aa).

Residues 1 to 21 show a composition bias toward low complexity; it reads MAEAKTGAKATKSAAAGAADG. The tract at residues 1-44 is disordered; that stretch reads MAEAKTGAKATKSAAAGAADGASKEKGPKHTPSTPKPRGRRKTR.

This sequence belongs to the universal ribosomal protein uS17 family. As to quaternary structure, part of the 30S ribosomal subunit.

Its function is as follows. One of the primary rRNA binding proteins, it binds specifically to the 5'-end of 16S ribosomal RNA. The polypeptide is Small ribosomal subunit protein uS17 (Mycobacterium marinum (strain ATCC BAA-535 / M)).